Here is a 227-residue protein sequence, read N- to C-terminus: Cytochrome c oxidase subunit 2 (227 aa).

Over 1–14 (MAYPMQLGFQDATS) the chain is Mitochondrial intermembrane. Residues 15-45 (PIMEELLHFHDHTLMIVFLISSLVLYIISLM) form a helical membrane-spanning segment. Topologically, residues 46-59 (LTTKLTHTSTMDAQ) are mitochondrial matrix. Residues 60 to 87 (EVETVWTILPAIILIMIALPSLRILYMM) traverse the membrane as a helical segment. The Mitochondrial intermembrane segment spans residues 88–227 (DEINNPSLTV…YFEKWSASML (140 aa)). Residues histidine 161, cysteine 196, glutamate 198, cysteine 200, histidine 204, and methionine 207 each contribute to the Cu cation site. Glutamate 198 is a Mg(2+) binding site. Tyrosine 218 carries the post-translational modification Phosphotyrosine.

Belongs to the cytochrome c oxidase subunit 2 family. In terms of assembly, component of the cytochrome c oxidase (complex IV, CIV), a multisubunit enzyme composed of 14 subunits. The complex is composed of a catalytic core of 3 subunits MT-CO1, MT-CO2 and MT-CO3, encoded in the mitochondrial DNA, and 11 supernumerary subunits COX4I, COX5A, COX5B, COX6A, COX6B, COX6C, COX7A, COX7B, COX7C, COX8 and NDUFA4, which are encoded in the nuclear genome. The complex exists as a monomer or a dimer and forms supercomplexes (SCs) in the inner mitochondrial membrane with NADH-ubiquinone oxidoreductase (complex I, CI) and ubiquinol-cytochrome c oxidoreductase (cytochrome b-c1 complex, complex III, CIII), resulting in different assemblies (supercomplex SCI(1)III(2)IV(1) and megacomplex MCI(2)III(2)IV(2)). Found in a complex with TMEM177, COA6, COX18, COX20, SCO1 and SCO2. Interacts with TMEM177 in a COX20-dependent manner. Interacts with COX20. Interacts with COX16. Cu cation is required as a cofactor.

It is found in the mitochondrion inner membrane. It carries out the reaction 4 Fe(II)-[cytochrome c] + O2 + 8 H(+)(in) = 4 Fe(III)-[cytochrome c] + 2 H2O + 4 H(+)(out). Component of the cytochrome c oxidase, the last enzyme in the mitochondrial electron transport chain which drives oxidative phosphorylation. The respiratory chain contains 3 multisubunit complexes succinate dehydrogenase (complex II, CII), ubiquinol-cytochrome c oxidoreductase (cytochrome b-c1 complex, complex III, CIII) and cytochrome c oxidase (complex IV, CIV), that cooperate to transfer electrons derived from NADH and succinate to molecular oxygen, creating an electrochemical gradient over the inner membrane that drives transmembrane transport and the ATP synthase. Cytochrome c oxidase is the component of the respiratory chain that catalyzes the reduction of oxygen to water. Electrons originating from reduced cytochrome c in the intermembrane space (IMS) are transferred via the dinuclear copper A center (CU(A)) of subunit 2 and heme A of subunit 1 to the active site in subunit 1, a binuclear center (BNC) formed by heme A3 and copper B (CU(B)). The BNC reduces molecular oxygen to 2 water molecules using 4 electrons from cytochrome c in the IMS and 4 protons from the mitochondrial matrix. In Capra hircus (Goat), this protein is Cytochrome c oxidase subunit 2 (MT-CO2).